The primary structure comprises 565 residues: Oxygen-dependent choline dehydrogenase (565 aa).

Residue 6-35 (DYIIVGAGSAGNTLATRLTEDAGVTVLLLE) coordinates FAD. The active-site Proton acceptor is His-475.

Belongs to the GMC oxidoreductase family. The cofactor is FAD.

The enzyme catalyses choline + A = betaine aldehyde + AH2. It carries out the reaction betaine aldehyde + NAD(+) + H2O = glycine betaine + NADH + 2 H(+). The protein operates within amine and polyamine biosynthesis; betaine biosynthesis via choline pathway; betaine aldehyde from choline (cytochrome c reductase route): step 1/1. Involved in the biosynthesis of the osmoprotectant glycine betaine. Catalyzes the oxidation of choline to betaine aldehyde and betaine aldehyde to glycine betaine at the same rate. The sequence is that of Oxygen-dependent choline dehydrogenase from Pseudomonas putida (strain ATCC 700007 / DSM 6899 / JCM 31910 / BCRC 17059 / LMG 24140 / F1).